The chain runs to 384 residues: Glycerol 3-phosphate oxidase (384 aa).

Residues 1–17 form the signal peptide; that stretch reads MQTIDVLIVGGGVIGTS. Ile-14 lines the FAD pocket. Cys-18 carries N-palmitoyl cysteine lipidation. Residue Cys-18 is the site of S-diacylglycerol cysteine attachment. FAD contacts are provided by residues Glu-33, 42-43, and 47-49; these read TS and SGV. Residues Ser-47 and His-51 each coordinate sn-glycerol 3-phosphate. The Proton acceptor role is filled by His-51. Val-177 is a binding site for FAD. 2 residues coordinate sn-glycerol 3-phosphate: Lys-258 and Arg-320. 346 to 347 contacts FAD; it reads MK. Ser-348 is a binding site for sn-glycerol 3-phosphate. Thr-352 provides a ligand contact to FAD.

As to quaternary structure, monomer. It depends on FAD as a cofactor.

It is found in the cytoplasm. The protein localises to the cell membrane. It carries out the reaction sn-glycerol 3-phosphate + O2 = dihydroxyacetone phosphate + H2O2. Its pathway is polyol metabolism; glycerol degradation via glycerol kinase pathway; glycerone phosphate from sn-glycerol 3-phosphate (aerobic route): step 1/1. Its function is as follows. Catalyzes the oxidation of glycerol 3-phosphate to dihydroxyacetone phosphate (DHAP), with a reduction of O2 to H2O2. The formation of hydrogen peroxide by this enzyme is crucial for cytotoxic effects on host cells. Does not show any dehydrogenase activity with NAD(+). The chain is Glycerol 3-phosphate oxidase from Mycoplasma genitalium (strain ATCC 33530 / DSM 19775 / NCTC 10195 / G37) (Mycoplasmoides genitalium).